Reading from the N-terminus, the 602-residue chain is Phosphoenolpyruvate carboxykinase [GTP] (602 aa).

Substrate contacts are provided by residues Arg89 and 211–213 (YAG). The Mn(2+) site is built by Lys220 and His239. Ser260 lines the substrate pocket. 261 to 266 (GSGKTS) is a GTP binding site. The active site involves Ser262. Residue Asp277 coordinates Mn(2+). Substrate is bound at residue 367–369 (NAR). GTP contacts are provided by Arg369 and Arg400.

The protein belongs to the phosphoenolpyruvate carboxykinase [GTP] family. Mn(2+) is required as a cofactor.

The protein resides in the cytoplasm. It catalyses the reaction oxaloacetate + GTP = phosphoenolpyruvate + GDP + CO2. It participates in carbohydrate biosynthesis; gluconeogenesis. Functionally, catalyzes the conversion of oxaloacetate (OAA) to phosphoenolpyruvate (PEP), the rate-limiting step in the metabolic pathway that produces glucose from lactate and other precursors derived from the citric acid cycle. This chain is Phosphoenolpyruvate carboxykinase [GTP], found in Sulfurisphaera tokodaii (strain DSM 16993 / JCM 10545 / NBRC 100140 / 7) (Sulfolobus tokodaii).